Reading from the N-terminus, the 541-residue chain is Malate synthase (541 aa).

The active-site Proton acceptor is arginine 172. The active-site Proton donor is aspartate 452.

Belongs to the malate synthase family.

Its subcellular location is the cytoplasm. The catalysed reaction is glyoxylate + acetyl-CoA + H2O = (S)-malate + CoA + H(+). It functions in the pathway carbohydrate metabolism; glyoxylate cycle; (S)-malate from isocitrate: step 2/2. In Myxococcus xanthus (strain DK1622), this protein is Malate synthase (mls).